The chain runs to 352 residues: A-type ATP synthase subunit C (352 aa).

This sequence belongs to the V-ATPase V0D/AC39 subunit family. In terms of assembly, has multiple subunits with at least A(3), B(3), C, D, E, F, H, I and proteolipid K(x).

The protein resides in the cell membrane. In terms of biological role, component of the A-type ATP synthase that produces ATP from ADP in the presence of a proton gradient across the membrane. This Halobacterium salinarum (strain ATCC 29341 / DSM 671 / R1) protein is A-type ATP synthase subunit C.